Reading from the N-terminus, the 411-residue chain is Arginine deiminase (411 aa).

Cys401 (amidino-cysteine intermediate) is an active-site residue.

This sequence belongs to the arginine deiminase family.

Its subcellular location is the cytoplasm. The catalysed reaction is L-arginine + H2O = L-citrulline + NH4(+). It participates in amino-acid degradation; L-arginine degradation via ADI pathway; carbamoyl phosphate from L-arginine: step 1/2. The chain is Arginine deiminase from Staphylococcus aureus (strain MRSA252).